The sequence spans 1016 residues: Mastermind-like protein 1 (1016 aa).

Residues M1–N123 are required for interaction with NOTCH proteins. A Phosphoserine modification is found at S45. Disordered stretches follow at residues Q65–D184, P263–V487, K561–Q617, E658–F681, and A796–A953. Residues K67–Q76 show a composition bias toward basic residues. Basic and acidic residues predominate over residues D93–L115. Over residues D116–G129 the composition is skewed to polar residues. Phosphoserine is present on S120. Residues P263–E282 show a composition bias toward basic and acidic residues. The span at S283 to L292 shows a compositional bias: polar residues. Phosphoserine is present on residues S303 and S314. A compositionally biased stretch (polar residues) spans A322–Q353. The residue at position 360 (S360) is a Phosphoserine. The segment covering E392–A403 has biased composition (polar residues). Over residues Q413–Q426 the composition is skewed to low complexity. Composition is skewed to polar residues over residues M427–S439, S451–K463, Q577–T595, and V602–Q617. The segment covering S801 to Q810 has biased composition (low complexity). An N6-acetyllysine modification is found at K822. Over residues G834–V885 the composition is skewed to polar residues. Phosphoserine is present on S1015.

This sequence belongs to the mastermind family. In terms of assembly, interacts (via N-terminus) with NOTCH1, NOTCH2, NOTCH3 and NOTCH4 (via ankyrin repeat region). Interacts (via N-terminus) with p53 (via DNA-binding region). Forms a DNA-binding complex with Notch proteins and RBPSUH/RBP-J kappa/CBF1. Also binds CREBBP/CBP and CDK8. Forms a complex with PRAG1, NOTCH1 and MAML1, in a MAML1-dependent manner. In terms of tissue distribution, widely expressed with highest levels in heart, pancreas, peripheral blood leukocytes and spleen.

It localises to the nucleus speckle. Functionally, acts as a transcriptional coactivator for NOTCH proteins. Has been shown to amplify NOTCH-induced transcription of HES1. Enhances phosphorylation and proteolytic turnover of the NOTCH intracellular domain in the nucleus through interaction with CDK8. Binds to CREBBP/CBP which promotes nucleosome acetylation at NOTCH enhancers and activates transcription. Induces phosphorylation and localization of CREBBP to nuclear foci. Plays a role in hematopoietic development by regulating NOTCH-mediated lymphoid cell fate decisions. This chain is Mastermind-like protein 1, found in Homo sapiens (Human).